Consider the following 241-residue polypeptide: LexA repressor (241 aa).

The segment at residues 41-61 (FREIGNAAGLKSPSSVKHQLQ) is a DNA-binding region (H-T-H motif). Residues serine 165 and lysine 202 each act as for autocatalytic cleavage activity in the active site.

The protein belongs to the peptidase S24 family. As to quaternary structure, homodimer.

The enzyme catalyses Hydrolysis of Ala-|-Gly bond in repressor LexA.. In terms of biological role, represses a number of genes involved in the response to DNA damage (SOS response), including recA and lexA. In the presence of single-stranded DNA, RecA interacts with LexA causing an autocatalytic cleavage which disrupts the DNA-binding part of LexA, leading to derepression of the SOS regulon and eventually DNA repair. The sequence is that of LexA repressor from Bifidobacterium longum subsp. infantis (strain ATCC 15697 / DSM 20088 / JCM 1222 / NCTC 11817 / S12).